The primary structure comprises 271 residues: GATA transcription factor 19 (271 aa).

The tract at residues 1–23 is disordered; sequence MAAEPPADGRDPPADDGAAGDGA. The Tify domain maps to 33 to 68; sequence LSAASEQLTLVYQGEVYVFDPVPPQKVQAVLLVLGG. Residues 95–137 enclose the CCT domain; that stretch reads RIASLMRFREKRKERCFDKKIRYSVRKEVAQKMKRRKGQFAGR. The GATA-type zinc finger occupies 166 to 193; sequence CQNCGISSRLTPAMRRGPAGPRSLCNAC. Residues 238-271 are disordered; it reads NQTTMKTDTEMVPEQEQKADVLPPTKEEDSMATS. Residues 252–271 are compositionally biased toward basic and acidic residues; sequence QEQKADVLPPTKEEDSMATS.

It belongs to the type IV zinc-finger family. Class C subfamily.

The protein resides in the nucleus. Functionally, transcriptional activator that specifically binds 5'-GATA-3' or 5'-GAT-3' motifs within gene promoters. The protein is GATA transcription factor 19 of Oryza sativa subsp. indica (Rice).